The following is a 97-amino-acid chain: Co-chaperonin GroES (97 aa).

The protein belongs to the GroES chaperonin family. In terms of assembly, heptamer of 7 subunits arranged in a ring. Interacts with the chaperonin GroEL.

The protein resides in the cytoplasm. Its function is as follows. Together with the chaperonin GroEL, plays an essential role in assisting protein folding. The GroEL-GroES system forms a nano-cage that allows encapsulation of the non-native substrate proteins and provides a physical environment optimized to promote and accelerate protein folding. GroES binds to the apical surface of the GroEL ring, thereby capping the opening of the GroEL channel. This Buchnera aphidicola subsp. Tuberolachnus salignus protein is Co-chaperonin GroES.